The sequence spans 575 residues: FAD-linked oxidoreductase asqF (575 aa).

The N-terminal stretch at 1–23 (MALFRLSAAIVVIFLYIWSPSQR) is a signal peptide. Asn45 and Asn80 each carry an N-linked (GlcNAc...) asparagine glycan. In terms of domain architecture, FAD-binding PCMH-type spans 118-306 (NQGRIPLYAA…VRVTMRTYPD (189 aa)). At His156 the chain carries Pros-8alpha-FAD histidine. N-linked (GlcNAc...) asparagine glycosylation is present at Asn370.

The protein belongs to the oxygen-dependent FAD-linked oxidoreductase family. FAD serves as cofactor.

The catalysed reaction is peniprequinolone + A = yaequinolone E + AH2. Its pathway is secondary metabolite biosynthesis. The protein operates within alkaloid biosynthesis. It functions in the pathway mycotoxin biosynthesis. FAD-linked oxidoreductase; part of the gene cluster that mediates the biosynthesis of the aspoquinolone mycotoxins. Within the pathway, asqF performs FAD-dependent dehydrogenation of the dimethylallyl quinolone peniprequinolone to yield the conjugated aryl diene yaequinolone E. The first step of the pathway is catalyzed by the nonribosomal peptide synthetase asqK that condenses anthranilic acid and O-methyl-L-tyrosine to produce 4'-methoxycyclopeptin. 4'-methoxycyclopeptin is then converted to 4'-methoxydehydrocyclopeptin by the ketoglutarate-dependent dioxygenase asqJ. AsqJ also converts its first product 4'-methoxydehydrocyclopeptin to 4'-methoxycyclopenin. The following conversion of 4'-methoxycyclopenin into 4'-methoxyviridicatin is catalyzed by the cyclopenase asqI. 4'-methoxyviridicatin is the precursor of quinolone natural products, and is further converted to quinolinone B. The prenyltransferase asqH1 then catalyzes the canonical Friedel-Crafts alkylation of quinolinone B with dimethylallyl cation to yield dimethylallyl quinolone, which is subjected to FAD-dependent dehydrogenation by the FAD-linked oxidoreductase asqF to yield conjugated aryl diene. The delta(3') double bond then serves as the site of the second alkylation with DMAPP catalyzed by the prenyltransferase asqH2 to yield a carbenium ion intermediate, which can be attacked by H(2)O to yield a styrenyl quinolone containing a C3'-hydroxyprenyl chain. The FAD-dependent monooxygenase asqG performs epoxidation of the terminal C7'-C8' olefin. Finally, after dehydratation of the epoxide at C3 by asqC, the quinolone epoxide rearrangement protein asqO catalyzes an enzymatic 3-exo-tet cyclization to yield the cyclopropyl-THF ring system in aspoquinolone. The chain is FAD-linked oxidoreductase asqF from Emericella nidulans (strain FGSC A4 / ATCC 38163 / CBS 112.46 / NRRL 194 / M139) (Aspergillus nidulans).